Reading from the N-terminus, the 54-residue chain is Ovomucoid (54 aa).

The Kazal-like domain maps to Val4–Cys54. 3 disulfide bridges follow: Cys6–Cys36, Cys14–Cys33, and Cys22–Cys54. Asn43 is a glycosylation site (N-linked (GlcNAc...) asparagine).

The protein localises to the secreted. This is Ovomucoid from Argusianus argus (Great argus).